A 371-amino-acid polypeptide reads, in one-letter code: Anhydro-N-acetylmuramic acid kinase (371 aa).

12–20 (GTVLDGNID) contacts ATP.

Belongs to the anhydro-N-acetylmuramic acid kinase family.

It catalyses the reaction 1,6-anhydro-N-acetyl-beta-muramate + ATP + H2O = N-acetyl-D-muramate 6-phosphate + ADP + H(+). The protein operates within amino-sugar metabolism; 1,6-anhydro-N-acetylmuramate degradation. It functions in the pathway cell wall biogenesis; peptidoglycan recycling. Functionally, catalyzes the specific phosphorylation of 1,6-anhydro-N-acetylmuramic acid (anhMurNAc) with the simultaneous cleavage of the 1,6-anhydro ring, generating MurNAc-6-P. Is required for the utilization of anhMurNAc either imported from the medium or derived from its own cell wall murein, and thus plays a role in cell wall recycling. The sequence is that of Anhydro-N-acetylmuramic acid kinase from Brucella anthropi (strain ATCC 49188 / DSM 6882 / CCUG 24695 / JCM 21032 / LMG 3331 / NBRC 15819 / NCTC 12168 / Alc 37) (Ochrobactrum anthropi).